The following is a 454-amino-acid chain: Glutaredoxin domain-containing cysteine-rich protein CG31559 (454 aa).

Disordered regions lie at residues 30–88 and 217–239; these read ETAD…QRQK and RSAR…GSDS. Residues 33-45 are compositionally biased toward polar residues; it reads DSGNGSDLESTGL. Over residues 58–69 the composition is skewed to low complexity; the sequence is SSLGSDSMHGSS. Polar residues predominate over residues 70-84; the sequence is TEYVRQSASQPSGQR. Residues 217–227 are compositionally biased toward basic and acidic residues; the sequence is RSARSGDEADH. The 106-residue stretch at 295–400 folds into the Glutaredoxin domain; that stretch reads NAKNFKEKDL…QLLKPYKSMA (106 aa).

Belongs to the GRXCR1 family.

The polypeptide is Glutaredoxin domain-containing cysteine-rich protein CG31559 (Drosophila melanogaster (Fruit fly)).